The following is a 155-amino-acid chain: Ribonuclease H (155 aa).

Positions M1 to M142 constitute an RNase H type-1 domain. 4 residues coordinate Mg(2+): D10, E48, D70, and D134.

Belongs to the RNase H family. In terms of assembly, monomer. Requires Mg(2+) as cofactor.

The protein localises to the cytoplasm. It catalyses the reaction Endonucleolytic cleavage to 5'-phosphomonoester.. Its function is as follows. Endonuclease that specifically degrades the RNA of RNA-DNA hybrids. This chain is Ribonuclease H, found in Escherichia coli O127:H6 (strain E2348/69 / EPEC).